We begin with the raw amino-acid sequence, 323 residues long: tRNA U34 carboxymethyltransferase (323 aa).

Carboxy-S-adenosyl-L-methionine-binding positions include lysine 91, tryptophan 105, lysine 110, glycine 130, aspartate 152–threonine 154, isoleucine 181–glutamate 182, methionine 196, tyrosine 200, and arginine 315.

Belongs to the class I-like SAM-binding methyltransferase superfamily. CmoB family. As to quaternary structure, homotetramer.

It carries out the reaction carboxy-S-adenosyl-L-methionine + 5-hydroxyuridine(34) in tRNA = 5-carboxymethoxyuridine(34) in tRNA + S-adenosyl-L-homocysteine + H(+). Its function is as follows. Catalyzes carboxymethyl transfer from carboxy-S-adenosyl-L-methionine (Cx-SAM) to 5-hydroxyuridine (ho5U) to form 5-carboxymethoxyuridine (cmo5U) at position 34 in tRNAs. In Photorhabdus laumondii subsp. laumondii (strain DSM 15139 / CIP 105565 / TT01) (Photorhabdus luminescens subsp. laumondii), this protein is tRNA U34 carboxymethyltransferase.